The following is a 108-amino-acid chain: MATPSHVVSRLTGGRAGNPIVEVIRSNATPTDGDQLEQFVARNRSLIKEFVLVLCGFLVVIMIILFFTLLVAVLTNAYAVQVGRAQFERALQRNYAPPTDASARASTA.

It belongs to the baculoviridae 11 kDa protein family.

This is an uncharacterized protein from Orgyia pseudotsugata (Douglas-fir tussock moth).